The sequence spans 692 residues: Elongation factor G (692 aa).

The 275-residue stretch at K8–L282 folds into the tr-type G domain. GTP is bound by residues A17–T24, D81–H85, and N135–D138.

Belongs to the TRAFAC class translation factor GTPase superfamily. Classic translation factor GTPase family. EF-G/EF-2 subfamily.

Its subcellular location is the cytoplasm. Functionally, catalyzes the GTP-dependent ribosomal translocation step during translation elongation. During this step, the ribosome changes from the pre-translocational (PRE) to the post-translocational (POST) state as the newly formed A-site-bound peptidyl-tRNA and P-site-bound deacylated tRNA move to the P and E sites, respectively. Catalyzes the coordinated movement of the two tRNA molecules, the mRNA and conformational changes in the ribosome. The polypeptide is Elongation factor G (Shouchella clausii (strain KSM-K16) (Alkalihalobacillus clausii)).